The chain runs to 555 residues: Urocanate hydratase (555 aa).

Residues 51–52 (GG), glutamine 129, 175–177 (GMG), glutamate 195, 262–266 (QTSAH), 272–273 (YL), and tyrosine 321 each bind NAD(+). Cysteine 409 is an active-site residue. Glycine 491 lines the NAD(+) pocket.

Belongs to the urocanase family. Requires NAD(+) as cofactor.

It localises to the cytoplasm. The enzyme catalyses 4-imidazolone-5-propanoate = trans-urocanate + H2O. It functions in the pathway amino-acid degradation; L-histidine degradation into L-glutamate; N-formimidoyl-L-glutamate from L-histidine: step 2/3. Functionally, catalyzes the conversion of urocanate to 4-imidazolone-5-propionate. In Xanthomonas axonopodis pv. citri (strain 306), this protein is Urocanate hydratase.